A 262-amino-acid chain; its full sequence is Capsid protein (262 aa).

Residues 183-262 (APTIEAITRP…SHHRSPSPRK (80 aa)) are disordered. Positions 215–233 (RRRKVKTTVVYGRRRSKSR) match the Bipartite nuclear localization signal motif. The segment covering 215–234 (RRRKVKTTVVYGRRRSKSRD) has biased composition (basic residues). A phosphoserine; by host mark is found at Ser232, Ser239, and Ser245. Over residues 252-262 (SSHHRSPSPRK) the composition is skewed to basic residues. The segment at 254-260 (HHRSPSP) is RNA binding.

This sequence belongs to the avihepadnavirus core antigen family. As to quaternary structure, homodimerizes, then multimerizes.

The protein localises to the virion. Its subcellular location is the host cytoplasm. In terms of biological role, self assembles to form an icosahedral capsid. Most capsid appear to be large particles with an icosahedral symmetry of T=4 and consist of 240 copies of capsid protein, though a fraction forms smaller T=3 particles consisting of 180 capsid proteins. Entering capsid are transported along microtubules to the nucleus. Phosphorylation of the capsid is thought to induce exposure of nuclear localization signal in the C-terminal portion of the capsid protein that allows binding to the nuclear pore complex via the importin (karyopherin-) alpha and beta. Capsids are imported in intact form through the nuclear pore into the nuclear basket, where it probably binds NUP153. Only capsids that contain the mature viral genome can release the viral DNA and capsid protein into the nucleoplasm. Immature capsids get stucked in the basket. Capsids encapsulate the pre-genomic RNA and the P protein. Pre-genomic RNA is reverse transcribed into DNA while the capsid is still in the cytoplasm. The capsid can then either be directed to the nucleus, providing more genome for transcription, or bud through the endoplasmic reticulum to provide new virions. This Anas (ducks) protein is Capsid protein (C).